Here is a 575-residue protein sequence, read N- to C-terminus: Septation ring formation regulator EzrA (575 aa).

Residues M1 to Y8 are Extracellular-facing. The chain crosses the membrane as a helical span at residues L9–L27. Topologically, residues R28–F575 are cytoplasmic. Coiled coils occupy residues Q110–L191, L265–I301, V354–D416, and T456–A526.

The protein belongs to the EzrA family.

Its subcellular location is the cell membrane. Its function is as follows. Negative regulator of FtsZ ring formation; modulates the frequency and position of FtsZ ring formation. Inhibits FtsZ ring formation at polar sites. Interacts either with FtsZ or with one of its binding partners to promote depolymerization. The chain is Septation ring formation regulator EzrA from Streptococcus pneumoniae (strain JJA).